Consider the following 246-residue polypeptide: Breast cancer metastasis-suppressor 1 (246 aa).

The tract at residues 1-57 is disordered; the sequence is MPVQPPSKDTEEMEAEGDSAAEMNGEEEESEEERSGSQTESEEESSEMDDEDYERRR. Acidic residues-rich tracts occupy residues 11–32 and 40–52; these read EEME…ESEE and ESEE…DDED. Residues 51–98 are a coiled coil; the sequence is EDYERRRSECVSEMLDLEKQFSELKEKLFRERLSQLRLRLEEVGAERA. Glycyl lysine isopeptide (Lys-Gly) (interchain with G-Cter in SUMO2) cross-links involve residues K184 and K242.

This sequence belongs to the BRMS1 family. As to quaternary structure, homohexamer (Potential). Interacts with SNX6, HDAC1 and RELA. Interacts with ARID4A. Identified in mSin3A corepressor complexes together with SIN3A, SIN3B, RBBP4, RBBP7, SAP30, SUDS3, ARID4A, HDAC1 and HDAC2. Interacts with SPOP; this recruits the protein to a ubiquitin ligase complex containing SPOP and CUL3. Post-translationally, ubiquitinated by a cullin-RING-based BCR (BTB-CUL3-RBX1) E3 ubiquitin-protein ligase complex containing SPOP, leading to proteasomal degradation. In terms of tissue distribution, expression levels are higher in term placentas than in early placentas. Low levels of expression observed in normal pregnancies and in molar pregnancies.

Its subcellular location is the nucleus. The protein resides in the cytoplasm. Transcriptional repressor. Down-regulates transcription activation by NF-kappa-B by promoting the deacetylation of RELA at 'Lys-310'. Promotes HDAC1 binding to promoter regions. Down-regulates expression of anti-apoptotic genes that are controlled by NF-kappa-B. Promotes apoptosis in cells that have inadequate adherence to a substrate, a process called anoikis, and may thereby inhibit metastasis. May be a mediator of metastasis suppression in breast carcinoma. This chain is Breast cancer metastasis-suppressor 1 (BRMS1), found in Homo sapiens (Human).